A 233-amino-acid polypeptide reads, in one-letter code: Biosynthetic peptidoglycan transglycosylase (233 aa).

The helical transmembrane segment at 8–28 (LIALPVGIFIFFNAYVYGNII) threads the bilayer.

It belongs to the glycosyltransferase 51 family.

Its subcellular location is the cell inner membrane. The enzyme catalyses [GlcNAc-(1-&gt;4)-Mur2Ac(oyl-L-Ala-gamma-D-Glu-L-Lys-D-Ala-D-Ala)](n)-di-trans,octa-cis-undecaprenyl diphosphate + beta-D-GlcNAc-(1-&gt;4)-Mur2Ac(oyl-L-Ala-gamma-D-Glu-L-Lys-D-Ala-D-Ala)-di-trans,octa-cis-undecaprenyl diphosphate = [GlcNAc-(1-&gt;4)-Mur2Ac(oyl-L-Ala-gamma-D-Glu-L-Lys-D-Ala-D-Ala)](n+1)-di-trans,octa-cis-undecaprenyl diphosphate + di-trans,octa-cis-undecaprenyl diphosphate + H(+). The protein operates within cell wall biogenesis; peptidoglycan biosynthesis. Its function is as follows. Peptidoglycan polymerase that catalyzes glycan chain elongation from lipid-linked precursors. This Neisseria meningitidis serogroup C (strain 053442) protein is Biosynthetic peptidoglycan transglycosylase.